We begin with the raw amino-acid sequence, 825 residues long: Phenylalanine--tRNA ligase beta subunit (825 aa).

The region spanning 39–154 (RSWAEGVVLG…KAHPLGSDAR (116 aa)) is the tRNA-binding domain. The 96-residue stretch at 411–506 (PLERTLKLRL…RLYGYDRFSE (96 aa)) folds into the B5 domain. Positions 484, 490, 493, and 494 each coordinate Mg(2+). The region spanning 731–824 (SPFPASDRDI…LEKHFPVTLR (94 aa)) is the FDX-ACB domain.

The protein belongs to the phenylalanyl-tRNA synthetase beta subunit family. Type 1 subfamily. As to quaternary structure, tetramer of two alpha and two beta subunits. The cofactor is Mg(2+).

The protein localises to the cytoplasm. The enzyme catalyses tRNA(Phe) + L-phenylalanine + ATP = L-phenylalanyl-tRNA(Phe) + AMP + diphosphate + H(+). The protein is Phenylalanine--tRNA ligase beta subunit of Synechococcus sp. (strain JA-3-3Ab) (Cyanobacteria bacterium Yellowstone A-Prime).